Reading from the N-terminus, the 87-residue chain is Large ribosomal subunit protein bL31B (87 aa).

The protein belongs to the bacterial ribosomal protein bL31 family. Type B subfamily. In terms of assembly, part of the 50S ribosomal subunit.

The protein is Large ribosomal subunit protein bL31B of Shigella boydii serotype 4 (strain Sb227).